We begin with the raw amino-acid sequence, 319 residues long: Mercury resistance probable Hg transport protein (319 aa).

4 residues coordinate Hg(2+): C298, C299, C318, and C319.

The protein is Mercury resistance probable Hg transport protein of Streptomyces lividans.